A 243-amino-acid chain; its full sequence is 1-(5-phosphoribosyl)-5-[(5-phosphoribosylamino)methylideneamino] imidazole-4-carboxamide isomerase (243 aa).

Catalysis depends on aspartate 8, which acts as the Proton acceptor. Aspartate 129 serves as the catalytic Proton donor.

It belongs to the HisA/HisF family.

It is found in the cytoplasm. The catalysed reaction is 1-(5-phospho-beta-D-ribosyl)-5-[(5-phospho-beta-D-ribosylamino)methylideneamino]imidazole-4-carboxamide = 5-[(5-phospho-1-deoxy-D-ribulos-1-ylimino)methylamino]-1-(5-phospho-beta-D-ribosyl)imidazole-4-carboxamide. It participates in amino-acid biosynthesis; L-histidine biosynthesis; L-histidine from 5-phospho-alpha-D-ribose 1-diphosphate: step 4/9. This is 1-(5-phosphoribosyl)-5-[(5-phosphoribosylamino)methylideneamino] imidazole-4-carboxamide isomerase from Brucella anthropi (strain ATCC 49188 / DSM 6882 / CCUG 24695 / JCM 21032 / LMG 3331 / NBRC 15819 / NCTC 12168 / Alc 37) (Ochrobactrum anthropi).